The sequence spans 391 residues: GTPase Obg (391 aa).

In terms of domain architecture, Obg spans 1–159; the sequence is MKFIDEALIR…RDLLLELMLL (159 aa). Positions 160–333 constitute an OBG-type G domain; the sequence is ADVGMLGLPN…LTRDIMDFIE (174 aa). GTP-binding positions include 166 to 173, 191 to 195, 213 to 216, 283 to 286, and 314 to 316; these read GLPNAGKS, FTTLV, DIPG, NKID, and SAA. Positions 173 and 193 each coordinate Mg(2+).

The protein belongs to the TRAFAC class OBG-HflX-like GTPase superfamily. OBG GTPase family. In terms of assembly, monomer. The cofactor is Mg(2+).

It is found in the cytoplasm. Functionally, an essential GTPase which binds GTP, GDP and possibly (p)ppGpp with moderate affinity, with high nucleotide exchange rates and a fairly low GTP hydrolysis rate. Plays a role in control of the cell cycle, stress response, ribosome biogenesis and in those bacteria that undergo differentiation, in morphogenesis control. The sequence is that of GTPase Obg from Actinobacillus pleuropneumoniae serotype 7 (strain AP76).